Consider the following 253-residue polypeptide: Small ribosomal subunit protein uS3 (253 aa).

The 71-residue stretch at 39 to 109 (IRNYVLARLK…EVKIDVVEVI (71 aa)) folds into the KH type-2 domain. Positions 220 to 253 (DEMKKMKDRRNDGGAKGRDSRDNRSKRRSRSKRS) are disordered. The span at 221 to 242 (EMKKMKDRRNDGGAKGRDSRDN) shows a compositional bias: basic and acidic residues. The segment covering 243-253 (RSKRRSRSKRS) has biased composition (basic residues).

It belongs to the universal ribosomal protein uS3 family. In terms of assembly, part of the 30S ribosomal subunit. Forms a tight complex with proteins S10 and S14.

Functionally, binds the lower part of the 30S subunit head. Binds mRNA in the 70S ribosome, positioning it for translation. This is Small ribosomal subunit protein uS3 from Chlorobium chlorochromatii (strain CaD3).